A 595-amino-acid polypeptide reads, in one-letter code: Aspartate--tRNA(Asp/Asn) ligase (595 aa).

Position 175 (Glu-175) interacts with L-aspartate. Residues 199–202 form an aspartate region; the sequence is QQYK. L-aspartate-binding residues include Arg-221 and His-454. 221–223 lines the ATP pocket; the sequence is RDE. Position 488 (Glu-488) interacts with ATP. Arg-495 contacts L-aspartate. 540-543 is an ATP binding site; that stretch reads GIDR.

This sequence belongs to the class-II aminoacyl-tRNA synthetase family. Type 1 subfamily. Homodimer.

The protein localises to the cytoplasm. It carries out the reaction tRNA(Asx) + L-aspartate + ATP = L-aspartyl-tRNA(Asx) + AMP + diphosphate. In terms of biological role, aspartyl-tRNA synthetase with relaxed tRNA specificity since it is able to aspartylate not only its cognate tRNA(Asp) but also tRNA(Asn). Reaction proceeds in two steps: L-aspartate is first activated by ATP to form Asp-AMP and then transferred to the acceptor end of tRNA(Asp/Asn). This is Aspartate--tRNA(Asp/Asn) ligase from Sinorhizobium fredii (strain NBRC 101917 / NGR234).